Here is a 506-residue protein sequence, read N- to C-terminus: AMP phosphorylase (506 aa).

AMP contacts are provided by residues Gly167, Ser193–Gly198, and Thr202. The active-site Proton donor is Asp255. Residues Ser263 and Lys287 each contribute to the AMP site.

This sequence belongs to the thymidine/pyrimidine-nucleoside phosphorylase family. Type 2 subfamily.

It carries out the reaction AMP + phosphate = alpha-D-ribose 1,5-bisphosphate + adenine. The enzyme catalyses CMP + phosphate = cytosine + alpha-D-ribose 1,5-bisphosphate. It catalyses the reaction UMP + phosphate = alpha-D-ribose 1,5-bisphosphate + uracil. In terms of biological role, catalyzes the conversion of AMP and phosphate to adenine and ribose 1,5-bisphosphate (R15P). Exhibits phosphorylase activity toward CMP and UMP in addition to AMP. Functions in an archaeal AMP degradation pathway, together with R15P isomerase and RubisCO. The protein is AMP phosphorylase of Methanosarcina barkeri (strain Fusaro / DSM 804).